A 398-amino-acid chain; its full sequence is 1-deoxy-D-xylulose 5-phosphate reductoisomerase (398 aa).

Threonine 11, glycine 12, serine 13, isoleucine 14, arginine 38, asparagine 39, and asparagine 125 together coordinate NADPH. 1-deoxy-D-xylulose 5-phosphate is bound at residue lysine 126. Glutamate 127 contributes to the NADPH binding site. Mn(2+) is bound at residue aspartate 151. 1-deoxy-D-xylulose 5-phosphate contacts are provided by serine 152, glutamate 153, serine 179, and histidine 202. Position 153 (glutamate 153) interacts with Mn(2+). Glycine 208 serves as a coordination point for NADPH. 4 residues coordinate 1-deoxy-D-xylulose 5-phosphate: serine 215, asparagine 220, lysine 221, and glutamate 224. Glutamate 224 serves as a coordination point for Mn(2+).

This sequence belongs to the DXR family. The cofactor is Mg(2+). It depends on Mn(2+) as a cofactor.

It carries out the reaction 2-C-methyl-D-erythritol 4-phosphate + NADP(+) = 1-deoxy-D-xylulose 5-phosphate + NADPH + H(+). It participates in isoprenoid biosynthesis; isopentenyl diphosphate biosynthesis via DXP pathway; isopentenyl diphosphate from 1-deoxy-D-xylulose 5-phosphate: step 1/6. Functionally, catalyzes the NADPH-dependent rearrangement and reduction of 1-deoxy-D-xylulose-5-phosphate (DXP) to 2-C-methyl-D-erythritol 4-phosphate (MEP). In Burkholderia vietnamiensis (strain G4 / LMG 22486) (Burkholderia cepacia (strain R1808)), this protein is 1-deoxy-D-xylulose 5-phosphate reductoisomerase.